A 629-amino-acid chain; its full sequence is Dihydroxy-acid dehydratase 2 (629 aa).

Aspartate 82 provides a ligand contact to Mg(2+). Cysteine 123 contacts [2Fe-2S] cluster. Mg(2+)-binding residues include aspartate 124 and lysine 125. Lysine 125 bears the N6-carboxylysine mark. Position 197 (cysteine 197) interacts with [2Fe-2S] cluster. A Mg(2+)-binding site is contributed by glutamate 493. Serine 519 serves as the catalytic Proton acceptor. A disordered region spans residues 603 to 629 (DKGGVRRLPPDELGGPEAAFDTQTRAG).

Belongs to the IlvD/Edd family. As to quaternary structure, homodimer. [2Fe-2S] cluster serves as cofactor. Mg(2+) is required as a cofactor.

It catalyses the reaction (2R)-2,3-dihydroxy-3-methylbutanoate = 3-methyl-2-oxobutanoate + H2O. The catalysed reaction is (2R,3R)-2,3-dihydroxy-3-methylpentanoate = (S)-3-methyl-2-oxopentanoate + H2O. It functions in the pathway amino-acid biosynthesis; L-isoleucine biosynthesis; L-isoleucine from 2-oxobutanoate: step 3/4. The protein operates within amino-acid biosynthesis; L-valine biosynthesis; L-valine from pyruvate: step 3/4. Functionally, functions in the biosynthesis of branched-chain amino acids. Catalyzes the dehydration of (2R,3R)-2,3-dihydroxy-3-methylpentanoate (2,3-dihydroxy-3-methylvalerate) into 2-oxo-3-methylpentanoate (2-oxo-3-methylvalerate) and of (2R)-2,3-dihydroxy-3-methylbutanoate (2,3-dihydroxyisovalerate) into 2-oxo-3-methylbutanoate (2-oxoisovalerate), the penultimate precursor to L-isoleucine and L-valine, respectively. The chain is Dihydroxy-acid dehydratase 2 from Nocardia farcinica (strain IFM 10152).